A 277-amino-acid chain; its full sequence is Urease accessory protein UreD (277 aa).

Belongs to the UreD family. As to quaternary structure, ureD, UreF and UreG form a complex that acts as a GTP-hydrolysis-dependent molecular chaperone, activating the urease apoprotein by helping to assemble the nickel containing metallocenter of UreC. The UreE protein probably delivers the nickel.

It is found in the cytoplasm. Functionally, required for maturation of urease via the functional incorporation of the urease nickel metallocenter. The chain is Urease accessory protein UreD from Pseudomonas entomophila (strain L48).